A 549-amino-acid polypeptide reads, in one-letter code: mRNA-capping enzyme subunit beta (549 aa).

Ser2 carries the post-translational modification N-acetylserine. Ser15 carries the phosphoserine modification. A disordered region spans residues Leu30 to Asn169. The segment covering Asp86–Met96 has biased composition (acidic residues). Ser124 is subject to Phosphoserine. Basic and acidic residues predominate over residues Ala135–Ile157. Residue Lys223 is the N6-GMP-lysine intermediate of the active site.

The protein belongs to the fungal TPase family. In terms of assembly, heterodimer. The mRNA-capping enzyme is composed of two separate chains alpha and beta, respectively a mRNA guanylyltransferase and an mRNA 5'-triphosphate monophosphatase. The cofactor is Mg(2+).

The protein resides in the nucleus. The catalysed reaction is a 5'-end triphospho-ribonucleoside in mRNA + H2O = a 5'-end diphospho-ribonucleoside in mRNA + phosphate + H(+). Functionally, first step of mRNA capping. Converts the 5'-triphosphate end of a nascent mRNA chain into a diphosphate end. This chain is mRNA-capping enzyme subunit beta (CET1), found in Saccharomyces cerevisiae (strain ATCC 204508 / S288c) (Baker's yeast).